A 1007-amino-acid polypeptide reads, in one-letter code: Glutamate receptor ionotropic, delta-2 (1007 aa).

A signal peptide spans 1 to 23 (MEVFPLLLFLSFCWSRTWDLATA). An interaction with CBLN1 homotrimer region spans residues 24-345 (DSIIHIGAIF…NAFHKKLEDR (322 aa)). Residues 24 to 566 (DSIIHIGAIF…DMFACLAPFD (543 aa)) lie on the Extracellular side of the membrane. Cystine bridges form between Cys83-Cys355, Cys99-Cys131, and Cys298-Cys310. Asn293 carries N-linked (GlcNAc...) asparagine glycosylation. Asn426 is a glycosylation site (N-linked (GlcNAc...) asparagine). Ca(2+)-binding residues include Glu531, Val534, and Asp535. Residues 567 to 587 (LSLWACIAGTVLLVGLLVYLL) traverse the membrane as a helical segment. At 588–635 (NWLNPPRLQMGSMTSTTLYNSMWFVYGSFVQQGGEVPYTTLATRMMMG) the chain is on the cytoplasmic side. A helical membrane pass occupies residues 636-656 (AWWLFALIVISSYTANLAAFL). Residues 657–830 (TITRIESSIQ…QKGGALDIKS (174 aa)) are Extracellular-facing. Residues Asn713 and Asn716 are each glycosylated (N-linked (GlcNAc...) asparagine). Positions 753, 755, and 757 each coordinate Ca(2+). Residues 831-851 (LAGVFCILAAGIVLSCLIAVL) traverse the membrane as a helical segment. Over 852 to 1007 (ETWWSRRKGS…GNDPDRGTSI (156 aa)) the chain is Cytoplasmic. Ser883 is subject to Phosphoserine. Phosphothreonine is present on Thr886. At Ser890 the chain carries Phosphoserine. Residues 921-991 (DFRNTHITTT…MSSIPYQPTP (71 aa)) form an interaction with AP4M1 region. The PDZ-binding signature appears at 1005 to 1007 (TSI). A Phosphoserine modification is found at Ser1006.

The protein belongs to the glutamate-gated ion channel (TC 1.A.10.1) family. GRID2 subfamily. In terms of assembly, tetramer; dimer of dimers. Interacts with EML2, MAGI2 (via PDZ domains) and AP4M1. Interacts with BECN1, GOPC, GRID2IP, SHANK1 and SHANK2. Interacts with CBLN2, but not with CBLN4. Interacts with CBLN1 (via C1q domain); the interaction is CBLN1-NRX1 complex formation-dependent; CBLN1-binding is calcium-independent; CBLN1 hexamers anchor GRID2 N-terminal domain dimers to monomeric NRXN1 isoform beta; promotes synaptogenesis and mediates the D-Serine-dependent long term depression signals and AMPA receptor endocytosis. As to expression, expressed selectively in cerebellar Purkinje cells where it is localized in dendritic spines.

It localises to the postsynaptic cell membrane. It carries out the reaction Ca(2+)(in) = Ca(2+)(out). It catalyses the reaction Na(+)(in) = Na(+)(out). Its function is as follows. Member of the ionotropic glutamate receptor family, which plays a crucial role in synaptic organization and signal transduction in the central nervous system. Although it shares structural features with ionotropic glutamate receptors, does not bind glutamate as a primary ligand. Promotes synaptogenesis and mediates the D-Serine-dependent long term depression signals and AMPA receptor endocytosis of cerebellar parallel fiber-Purkinje cell (PF-PC) synapses through the NRX1B-CBLN1-GRID2 triad complex. In the presence of neurexins and cerebellins, forms cation-selective channels that are proposed to be gated by glycine and D-serine. However, recent research disputes this ligand-gated cation channel activity. Cation-selective ion channel activity can be triggered by GRM1 in Purkinje cells. The protein is Glutamate receptor ionotropic, delta-2 (Grid2) of Mus musculus (Mouse).